The following is a 479-amino-acid chain: Ribulose bisphosphate carboxylase large chain (479 aa).

Positions 1-2 (MS) are excised as a propeptide. 2 residues coordinate substrate: N123 and T173. K175 serves as the catalytic Proton acceptor. K177 lines the substrate pocket. Residues K201, D203, and E204 each coordinate Mg(2+). K201 bears the N6-carboxylysine mark. S208 carries the phosphoserine modification. The active-site Proton acceptor is the H294. Residues R295 and H327 each coordinate substrate. Residue T330 is modified to Phosphothreonine. S379 provides a ligand contact to substrate.

Belongs to the RuBisCO large chain family. Type I subfamily. Heterohexadecamer of 8 large chains and 8 small chains; disulfide-linked. The disulfide link is formed within the large subunit homodimers. It depends on Mg(2+) as a cofactor. Post-translationally, the disulfide bond which can form in the large chain dimeric partners within the hexadecamer appears to be associated with oxidative stress and protein turnover.

The protein localises to the plastid. The protein resides in the chloroplast. It catalyses the reaction 2 (2R)-3-phosphoglycerate + 2 H(+) = D-ribulose 1,5-bisphosphate + CO2 + H2O. The enzyme catalyses D-ribulose 1,5-bisphosphate + O2 = 2-phosphoglycolate + (2R)-3-phosphoglycerate + 2 H(+). RuBisCO catalyzes two reactions: the carboxylation of D-ribulose 1,5-bisphosphate, the primary event in carbon dioxide fixation, as well as the oxidative fragmentation of the pentose substrate in the photorespiration process. Both reactions occur simultaneously and in competition at the same active site. This Draba nemorosa (Woodland whitlowgrass) protein is Ribulose bisphosphate carboxylase large chain.